Consider the following 120-residue polypeptide: Glycine cleavage system H protein (120 aa).

A Lipoyl-binding domain is found at 17–99; the sequence is IATVGITSHA…QGAGWFFKLK (83 aa). An N6-lipoyllysine modification is found at Lys58.

Belongs to the GcvH family. The glycine cleavage system is composed of four proteins: P, T, L and H. (R)-lipoate serves as cofactor.

Functionally, the glycine cleavage system catalyzes the degradation of glycine. The H protein shuttles the methylamine group of glycine from the P protein to the T protein. This chain is Glycine cleavage system H protein, found in Agrobacterium fabrum (strain C58 / ATCC 33970) (Agrobacterium tumefaciens (strain C58)).